The following is a 419-amino-acid chain: BTB/POZ domain-containing protein KCTD20 (419 aa).

The BTB domain maps to 117–191; the sequence is EKVTLLVDGT…YKTGIINCPD (75 aa).

In terms of assembly, interacts with AKT1; AKT2 and AKT3. Associates with PP2CA. Part of a complex containing MARK4.

It localises to the cytoplasm. Its function is as follows. Promotes the phosphorylation of AKT family members. This chain is BTB/POZ domain-containing protein KCTD20 (KCTD20), found in Homo sapiens (Human).